The sequence spans 501 residues: Glucose-6-phosphate exchanger SLC37A2 (501 aa).

A helical membrane pass occupies residues 19–39 (SWFRGLILLLTFLIYACYHMS). Residues Asn53, Asn62, and Asn68 are each glycosylated (N-linked (GlcNAc...) asparagine). Transmembrane regions (helical) follow at residues 88–108 (GGVDNAFLIAYAIGMFISGVF), 118–138 (LSAGMLLSGLFTSLFGLGYFW), 145–165 (YFVVIQVCNGLVQTTGWPSVV), 189–209 (SVGNILGSLIAGIWVNGQWGL), and 210–230 (SFIVPGIITAVMGVITFLFLI). A disordered region spans residues 240-262 (PPQHHGEPAENQDNPEDPGNSPC). Transmembrane regions (helical) follow at residues 302–322 (LCLLFAKLVSYTFLYWLPLYI), 334–354 (GDLSTLFDVGGIIGGIVAGLV), 362–382 (ATTCCVMLILAAPMMFLYNYI), 391–411 (IVMLIICGGLVNGPYALITTA), 434–454 (AIIDGTGSIGAALGPLLAGLI), and 462–482 (VFYMLISADVLACLLLCRLVY).

Belongs to the major facilitator superfamily. Organophosphate:Pi antiporter (OPA) (TC 2.A.1.4) family. Detected in intestine and pancreas. Lower expression is also detected in liver and kidney.

It localises to the endoplasmic reticulum membrane. It carries out the reaction D-glucose 6-phosphate(in) + phosphate(out) = D-glucose 6-phosphate(out) + phosphate(in). With respect to regulation, inhibited by vanadate but not by chlorogenic acid. Inorganic phosphate and glucose-6-phosphate antiporter. May transport cytoplasmic glucose-6-phosphate into the lumen of the endoplasmic reticulum and translocate inorganic phosphate into the opposite direction. Independent of a lumenal glucose-6-phosphatase. May not play a role in homeostatic regulation of blood glucose levels. The protein is Glucose-6-phosphate exchanger SLC37A2 of Homo sapiens (Human).